The following is a 419-amino-acid chain: Methyltransferase/ribosomally synthesized type I borosin cyclic peptide precursor gjuMa (419 aa).

The tract at residues 1 to 255 (MATPIATTTN…AISTLYVPPR (255 aa)) is methyltransferase domain. Residues Arg79, Tyr83, and Tyr105 contribute to the active site. 8 residues coordinate S-adenosyl-L-methionine: Tyr105, His107, Val110, Ala137, Gln179, Gly217, Ser248, and Thr249. The clasp domain stretch occupies residues 256 to 381 (DISPVDPTMA…GAVYALMSRP (126 aa)). A precursor leader region spans residues 382–404 (TGDIAREKELTNDEIANNHGAPY). Ser408 is modified (N-methylserine). Residue Ala409 is modified to N-methylalanine. Val410 bears the N-methylvaline mark. N-methylisoleucine occurs at positions 411 and 412. 2 positions are modified to N-methylalanine: Ala413 and Ala414. An N-methylisoleucine mark is found at Ile415 and Ile416.

It in the N-terminal section; belongs to the precorrin methyltransferase family. In terms of assembly, homodimer. GjuMA automethylates at Ser-408, Ala-409, Val-410, Ile-411, Ile-412, Ala-413, Ala-414, Ile-415 and Ile-416 before being processed by ae prolyloligopeptidase which likely forms a peptidyl ester upon removal of the follower propeptide, which then undergoes macrocyclization with the N-terminus of the modified core peptide. Peptide backbone alpha-N-methylations change the physicochemical properties of amide bonds to provide structural constraints and other favorable characteristics including biological membrane permeability to peptides.

Its pathway is secondary metabolite biosynthesis. Functionally, fusion protein of the methyltransferase gjuM and the type I borosin core peptide; part of the gene cluster that mediates the biosynthesis of a type I borosin, a highly methylated cyclic peptide with potent biological activities. Type I borosins derive from the C-terminus of the fusion protein, and it is the same protein that methylates its own C-terminus using S-adenosyl methionine (SAM). The C-terminus is subsequently cleaved off and macrocyclized by a prolyloligopeptidase to give the final product. This Gymnopilus junonius (Spectacular rustgill mushroom) protein is Methyltransferase/ribosomally synthesized type I borosin cyclic peptide precursor gjuMa.